Reading from the N-terminus, the 681-residue chain is Serine/threonine-protein kinase PAK 6 (681 aa).

Disordered stretches follow at residues 1–30, 149–169, 200–256, and 268–355; these read MFRK…DPKE, GGTP…PRVL, QSSP…ESSL, and TAAT…PRTW. One can recognise a CRIB domain in the interval 12–25; it reads ISAPQNFQHRVHTS. A linker region spans residues 26–406; sequence FDPKEGKFVG…VVDQGDPRLL (381 aa). Low complexity-rich tracts occupy residues 201–212 and 268–278; these read SSPPGASPPTGT and TAATAPPSSSK. Positions 308–333 are enriched in polar residues; the sequence is SLPSDQPVGTFSPLTTSDTSSPQKSL. Residues 407 to 658 form the Protein kinase domain; sequence LDSYVKIGEG…AQELLDHPFL (252 aa). Residues 413-421 and lysine 436 contribute to the ATP site; that span reads IGEGSTGIV. The active-site Proton acceptor is the aspartate 526. Serine 560 is subject to Phosphoserine; by autocatalysis.

The protein belongs to the protein kinase superfamily. STE Ser/Thr protein kinase family. STE20 subfamily. Interacts tightly with GTP-bound but not GDP-bound CDC42/p21 and RAC1. Interacts with the androgen receptor AR and the estrogen receptor ESR1. Interacts with IQGAP1 and PPM1B. In terms of processing, autophosphorylated. Phosphorylated by MAP2K6//MAPKK6, leading to PAK6 activation. In terms of tissue distribution, selectively expressed in brain and testis, with lower levels in multiple tissues including prostate and breast.

The protein localises to the cytoplasm. It is found in the nucleus. It carries out the reaction L-seryl-[protein] + ATP = O-phospho-L-seryl-[protein] + ADP + H(+). The catalysed reaction is L-threonyl-[protein] + ATP = O-phospho-L-threonyl-[protein] + ADP + H(+). Its function is as follows. Serine/threonine protein kinase that plays a role in the regulation of gene transcription. The kinase activity is induced by various effectors including AR or MAP2K6/MAPKK6. Phosphorylates the DNA-binding domain of androgen receptor/AR and thereby inhibits AR-mediated transcription. Also inhibits ESR1-mediated transcription. May play a role in cytoskeleton regulation by interacting with IQGAP1. May protect cells from apoptosis through phosphorylation of BAD. This Homo sapiens (Human) protein is Serine/threonine-protein kinase PAK 6 (PAK6).